The chain runs to 93 residues: Protein salt-induced and EIN3/EIL1-dependent 1 (93 aa).

The segment covering 23-36 (SSLLTESSSSSLCS) has biased composition (low complexity). The segment at 23–46 (SSLLTESSSSSLCSEEAEGGGGEA) is disordered.

Triggered by EIN3. In terms of biological role, involved in ethylene-dependent salt stress responses by reducing reactive oxygen species (ROS) accumulation. The polypeptide is Protein salt-induced and EIN3/EIL1-dependent 1 (Arabidopsis thaliana (Mouse-ear cress)).